Reading from the N-terminus, the 217-residue chain is Probable transaldolase (217 aa).

The active-site Schiff-base intermediate with substrate is the Lys-83.

It belongs to the transaldolase family. Type 3B subfamily.

It localises to the cytoplasm. The catalysed reaction is D-sedoheptulose 7-phosphate + D-glyceraldehyde 3-phosphate = D-erythrose 4-phosphate + beta-D-fructose 6-phosphate. It participates in carbohydrate degradation; pentose phosphate pathway; D-glyceraldehyde 3-phosphate and beta-D-fructose 6-phosphate from D-ribose 5-phosphate and D-xylulose 5-phosphate (non-oxidative stage): step 2/3. Functionally, transaldolase is important for the balance of metabolites in the pentose-phosphate pathway. This Sinorhizobium medicae (strain WSM419) (Ensifer medicae) protein is Probable transaldolase.